The sequence spans 328 residues: MNQVDYLRISLIDRCNFRCQYCMPEGVELDYILKQQLLTNEELLTLIREVFIPVGFNRFRLTGGEPLLRPRVVDLVSAIATLPQTQDLSMTTNGFLLAPMAQNLYNAGLRRINISLDSLDADTFDQIIGNQGRSRWQQVWHGIQAAHSVGFDPLKLNVVVIPGVNDHEILDLAALTIDKQWHVRFIEFMPIGNVDLFGDRGWVSSAELRQQIRDRWGLTESQVRGAGPADVFKIPGAKGTLGFISQMSECFCDRCNRMRLSADGWLRPCLLNETGQIDLKTALRSGTSTAQLQEQVRHLLRMKPEINFKGRDSGIVGTYTRTMSQIGG.

The Radical SAM core domain maps to Met-1–Ala-229. Arg-8 contributes to the GTP binding site. [4Fe-4S] cluster is bound by residues Cys-15 and Cys-19. Residue Tyr-21 coordinates S-adenosyl-L-methionine. Cys-22 is a binding site for [4Fe-4S] cluster. Arg-60 provides a ligand contact to GTP. S-adenosyl-L-methionine is bound at residue Gly-64. Residue Thr-91 participates in GTP binding. Ser-115 provides a ligand contact to S-adenosyl-L-methionine. Lys-155 contacts GTP. Met-189 is a binding site for S-adenosyl-L-methionine. Residues Cys-252 and Cys-255 each contribute to the [4Fe-4S] cluster site. Arg-257 to Arg-259 provides a ligand contact to GTP. [4Fe-4S] cluster is bound at residue Cys-269.

Belongs to the radical SAM superfamily. MoaA family. In terms of assembly, monomer and homodimer. [4Fe-4S] cluster serves as cofactor.

It catalyses the reaction GTP + AH2 + S-adenosyl-L-methionine = (8S)-3',8-cyclo-7,8-dihydroguanosine 5'-triphosphate + 5'-deoxyadenosine + L-methionine + A + H(+). The protein operates within cofactor biosynthesis; molybdopterin biosynthesis. In terms of biological role, catalyzes the cyclization of GTP to (8S)-3',8-cyclo-7,8-dihydroguanosine 5'-triphosphate. The chain is GTP 3',8-cyclase from Nostoc punctiforme (strain ATCC 29133 / PCC 73102).